A 432-amino-acid chain; its full sequence is Phosphomethylpyrimidine synthase (432 aa).

Substrate is bound by residues N69, M98, Y127, H163, 185-187 (SRG), 226-229 (DACR), and E265. A Zn(2+)-binding site is contributed by H269. Residue Y292 participates in substrate binding. A Zn(2+)-binding site is contributed by H333. 3 residues coordinate [4Fe-4S] cluster: C409, C412, and C416.

The protein belongs to the ThiC family. Requires [4Fe-4S] cluster as cofactor.

The enzyme catalyses 5-amino-1-(5-phospho-beta-D-ribosyl)imidazole + S-adenosyl-L-methionine = 4-amino-2-methyl-5-(phosphooxymethyl)pyrimidine + CO + 5'-deoxyadenosine + formate + L-methionine + 3 H(+). It functions in the pathway cofactor biosynthesis; thiamine diphosphate biosynthesis. Catalyzes the synthesis of the hydroxymethylpyrimidine phosphate (HMP-P) moiety of thiamine from aminoimidazole ribotide (AIR) in a radical S-adenosyl-L-methionine (SAM)-dependent reaction. The protein is Phosphomethylpyrimidine synthase of Pelotomaculum thermopropionicum (strain DSM 13744 / JCM 10971 / SI).